The sequence spans 272 residues: Cell division protein FtsQ (272 aa).

Residues 1 to 43 (MEYNPPNTRERIVARRQRMRRNSTEPVVPGWRWRLREGLRSGR) are Cytoplasmic-facing. The chain crosses the membrane as a helical span at residues 44 to 64 (IVSGIVFVISCFALFYVLFSS). At 65 to 272 (RFRVQTVEVV…FYQYRPDGSS (208 aa)) the chain is on the extracellular side. Residues 66–133 (FRVQTVEVVG…DRARIVIVER (68 aa)) enclose the POTRA domain.

Belongs to the FtsQ/DivIB family. FtsQ subfamily.

It is found in the cell membrane. Functionally, essential cell division protein. This is Cell division protein FtsQ from Chloroflexus aurantiacus (strain ATCC 29366 / DSM 635 / J-10-fl).